Consider the following 1925-residue polypeptide: Plexin-D1 (1925 aa).

The span at 1–21 (MARRAAGGAPPSARAAAAVPL) shows a compositional bias: low complexity. The disordered stretch occupies residues 1-26 (MARRAAGGAPPSARAAAAVPLRPRPH). The first 48 residues, 1 to 48 (MARRAAGGAPPSARAAAAVPLRPRPHSRGPGLLPLPLLLLLGAARAGA), serve as a signal peptide directing secretion. In terms of domain architecture, Sema spans 49-548 (LEIQRRFPSP…TSHQMARVKV (500 aa)). At 49–1271 (LEIQRRFPSP…TLQLGGSETA (1223 aa)) the chain is on the extracellular side. Cystine bridges form between Cys-106-Cys-116 and Cys-142-Cys-150. N-linked (GlcNAc...) asparagine glycans are attached at residues Asn-157 and Asn-226. Intrachain disulfides connect Cys-324/Cys-447 and Cys-347/Cys-391. Residue Asn-483 is glycosylated (N-linked (GlcNAc...) asparagine). 5 disulfides stabilise this stretch: Cys-551-Cys-568, Cys-557-Cys-602, Cys-560-Cys-577, Cys-571-Cys-583, and Cys-639-Cys-663. IPT/TIG domains follow at residues 893 to 977 (PEIR…SREQ), 983 to 1065 (PTVH…NLTF), and 1071 to 1145 (PVIT…FING). Asn-967 carries N-linked (GlcNAc...) asparagine glycosylation. The N-linked (GlcNAc...) asparagine glycan is linked to Asn-1120. A helical membrane pass occupies residues 1272–1292 (IVVSIVICSVLLLLSVVALFV). The Cytoplasmic segment spans residues 1293-1925 (FCTKSRRAER…NNIYECYSEA (633 aa)).

This sequence belongs to the plexin family. As to quaternary structure, interacts with NRP1 and SEMA4A. Interacts with SH3BP1; they dissociate upon SEMA3E binding to PLXND1 allowing SH3BP1 to transduce downstream signal through RAC1 inactivation. As to expression, detected in embryonic heart and vascular endothelium, brain, dorsal root ganglia, adrenal gland, lung mesenchyme, small intestine and in the ossification centers of vertebral bodies.

The protein localises to the cell membrane. Its subcellular location is the cell projection. The protein resides in the lamellipodium membrane. Its function is as follows. Cell surface receptor for SEMA4A and for class 3 semaphorins, such as SEMA3A, SEMA3C and SEMA3E. Plays an important role in cell-cell signaling, and in regulating the migration of a wide spectrum of cell types. Regulates the migration of thymocytes in the medulla. Regulates endothelial cell migration. Plays an important role in ensuring the specificity of synapse formation. Mediates anti-angiogenic signaling in response to SEMA3E. Required for normal development of the heart and vasculature. This chain is Plexin-D1 (Plxnd1), found in Mus musculus (Mouse).